The sequence spans 199 residues: NAD(P)H dehydrogenase (quinone) (199 aa).

The Flavodoxin-like domain maps to 4-190; the sequence is VLVLYYSAYG…GGARYQGKVI (187 aa). FMN-binding positions include 10–15 and 78–80; these read SAYGHI and TRF. Y12 lines the NAD(+) pocket. Position 98 (W98) interacts with substrate. FMN-binding positions include 113 to 119 and H134; that span reads STASQHG.

It belongs to the WrbA family. Requires FMN as cofactor.

The enzyme catalyses a quinone + NADH + H(+) = a quinol + NAD(+). The catalysed reaction is a quinone + NADPH + H(+) = a quinol + NADP(+). This is NAD(P)H dehydrogenase (quinone) from Rhodopseudomonas palustris (strain BisB18).